The primary structure comprises 476 residues: Bridging integrator 2 (476 aa).

Positions 26–242 constitute a BAR domain; it reads VLQKLGKTVE…MGKLDKQHSS (217 aa). 2 disordered regions span residues 269-369 and 395-476; these read YPCP…TEGA and GAAP…LTPL. Residues 279–292 are compositionally biased toward polar residues; it reads EPSSGAEQTPTSPR. The span at 310 to 324 shows a compositional bias: pro residues; it reads PAEPGAPMPGPPPAS. The span at 325 to 339 shows a compositional bias: low complexity; sequence PTSVRSASESESECS. A compositionally biased stretch (basic and acidic residues) spans 340–353; that stretch reads GESREIDLSPKEME. Over residues 461–476 the composition is skewed to polar residues; sequence VSCNPPQDPSESLTPL.

Its subcellular location is the cytoplasm. The sequence is that of Bridging integrator 2 (BIN2) from Gallus gallus (Chicken).